We begin with the raw amino-acid sequence, 369 residues long: 2-aminoethylphosphonate--pyruvate transaminase (369 aa).

Residue lysine 193 is modified to N6-(pyridoxal phosphate)lysine.

It belongs to the class-V pyridoxal-phosphate-dependent aminotransferase family. PhnW subfamily. As to quaternary structure, homodimer. It depends on pyridoxal 5'-phosphate as a cofactor.

It carries out the reaction (2-aminoethyl)phosphonate + pyruvate = phosphonoacetaldehyde + L-alanine. Its function is as follows. Involved in phosphonate degradation. This is 2-aminoethylphosphonate--pyruvate transaminase from Burkholderia pseudomallei (strain 668).